Here is a 430-residue protein sequence, read N- to C-terminus: MKMPKDKPHVNIVFIGHVDHGKSTTIGRLLYDTGNIPEQIIKKFEEMGEKGKSFKFAWVMDRLREERERGITIDVAHTKFETPHRYITIIDAPGHRDFVKNMITGASQADAAVLVVAATDGVMPQTKEHAFLARTLGIKHIIVAINKMDMVNYNQKRFEEVKAQVEKLLKMLGYKDFPVIPISAWEGENVVKKSDKMPWYNGPTLIEALDQIPEPEKPVDKPLRIPIQDVYSIKGVGTVPVGRVETGKLRVGEVVIFEPASTIFHKPIQGEVKSIEMHHEPLEEALPGDNIGFNVRGVSKNDIKRGDVAGHTTNPPTVVRTKDTFKAQIIVLNHPTAITVGYSPVLHAHTAQVPVRFEQLLAKLDPKTGNIVEENPQFIKTGDAAIVILRPMKPVVLEPVKEIPQLGRFAIRDMGMTIAAGMVISIQRGE.

The tr-type G domain maps to 7 to 219 (KPHVNIVFIG…DQIPEPEKPV (213 aa)). A G1 region spans residues 16–23 (GHVDHGKS). 16–23 (GHVDHGKS) is a GTP binding site. Position 23 (Ser-23) interacts with Mg(2+). The tract at residues 70–74 (GITID) is G2. The G3 stretch occupies residues 91 to 94 (DAPG). Residues 91–95 (DAPGH) and 146–149 (NKMD) contribute to the GTP site. The segment at 146 to 149 (NKMD) is G4. Positions 183 to 185 (SAW) are G5.

Belongs to the TRAFAC class translation factor GTPase superfamily. Classic translation factor GTPase family. EF-Tu/EF-1A subfamily.

It is found in the cytoplasm. It catalyses the reaction GTP + H2O = GDP + phosphate + H(+). Functionally, GTP hydrolase that promotes the GTP-dependent binding of aminoacyl-tRNA to the A-site of ribosomes during protein biosynthesis. The sequence is that of Elongation factor 1-alpha from Pyrococcus woesei.